The primary structure comprises 91 residues: Cell division topological specificity factor (91 aa).

This sequence belongs to the MinE family.

Its function is as follows. Prevents the cell division inhibition by proteins MinC and MinD at internal division sites while permitting inhibition at polar sites. This ensures cell division at the proper site by restricting the formation of a division septum at the midpoint of the long axis of the cell. The polypeptide is Cell division topological specificity factor (Chloroflexus aurantiacus (strain ATCC 29366 / DSM 635 / J-10-fl)).